Consider the following 473-residue polypeptide: MSPQTETKASVGFKAGVKEYKLTYYTPEYETKDTDILAAFRVTPQPGVPPEEAGAAVAAESSTGTWTTVWTDGLTSLDRYKGRCYHIEPVLGEKDQYICYVAYPLDLFEEGSVTNMFTSIVGNVFGFKALRALRLEDLRIPPAYIKTFQGPPHGIQVERDKLNKYGRPLLGCTIKPKLGLSAKNYGRAVYECLRGGLDFTKDDENVNSQPFMRWRDRFLFCAEAIYKAQAETGEIKGHYLNATAGTCEEMIKRAVFARELGVPIVMHDYLTGGFTANTTLAHYCRDNGLLLHIHRAMHAVIDRQKNHGMHFRVLAKALRLSGGDHIHAGTVVGKLEGEREITLGFVDLLRDDFVEKDRSRGIYFTQDWVSLPGVIPVASGGIHVWHMPALTEIFGDDSVLQFGGGTLGHPWGNAPGAVANRVALEACVQARNEGRDLAAEGNTIIREACKWSPELAAACEVWKEIKFEFPAMD.

The propeptide occupies 1 to 2 (MS). P3 is modified (N-acetylproline). An N6,N6,N6-trimethyllysine modification is found at K14. Substrate contacts are provided by N123 and T173. K175 serves as the catalytic Proton acceptor. K177 provides a ligand contact to substrate. Mg(2+) contacts are provided by K201, D203, and E204. K201 is subject to N6-carboxylysine. Catalysis depends on H294, which acts as the Proton acceptor. The substrate site is built by R295, H327, and S379.

It belongs to the RuBisCO large chain family. Type I subfamily. Heterohexadecamer of 8 large chains and 8 small chains; disulfide-linked. The disulfide link is formed within the large subunit homodimers. The cofactor is Mg(2+). In terms of processing, the disulfide bond which can form in the large chain dimeric partners within the hexadecamer appears to be associated with oxidative stress and protein turnover.

It is found in the plastid. The protein localises to the chloroplast. It carries out the reaction 2 (2R)-3-phosphoglycerate + 2 H(+) = D-ribulose 1,5-bisphosphate + CO2 + H2O. The catalysed reaction is D-ribulose 1,5-bisphosphate + O2 = 2-phosphoglycolate + (2R)-3-phosphoglycerate + 2 H(+). In terms of biological role, ruBisCO catalyzes two reactions: the carboxylation of D-ribulose 1,5-bisphosphate, the primary event in carbon dioxide fixation, as well as the oxidative fragmentation of the pentose substrate in the photorespiration process. Both reactions occur simultaneously and in competition at the same active site. The polypeptide is Ribulose bisphosphate carboxylase large chain (Ajuga chamaepitys (Yellow bugle)).